We begin with the raw amino-acid sequence, 459 residues long: Mitochondrial distribution and morphology protein 34 (459 aa).

The SMP-LTD domain maps to Met-1 to Gln-190. Positions Arg-338 to Lys-347 are enriched in basic and acidic residues. The interval Arg-338–Ser-375 is disordered. Basic residues predominate over residues Pro-348–Arg-359.

Belongs to the MDM34 family. Component of the ER-mitochondria encounter structure (ERMES) or MDM complex, composed of MMM1, MDM10, MDM12 and MDM34. In terms of processing, ubiquitinated by a SCF (SKP1-CUL1-F-box protein) E3 ubiquitin-protein ligase complex containing the F-box protein MDM30. Ubiquitination is important for mitochondrial integrity.

It is found in the mitochondrion outer membrane. Component of the ERMES/MDM complex, which serves as a molecular tether to connect the endoplasmic reticulum (ER) and mitochondria. Components of this complex are involved in the control of mitochondrial shape and protein biogenesis, and function in nonvesicular lipid trafficking between the ER and mitochondria. MDM34 is required for the interaction of the ER-resident membrane protein MMM1 and the outer mitochondrial membrane-resident beta-barrel protein MDM10. The sequence is that of Mitochondrial distribution and morphology protein 34 from Saccharomyces cerevisiae (strain AWRI1631) (Baker's yeast).